We begin with the raw amino-acid sequence, 408 residues long: 1-deoxy-D-xylulose 5-phosphate reductoisomerase (408 aa).

Positions 19, 20, 21, 22, 45, 47, and 130 each coordinate NADPH. Lysine 131 provides a ligand contact to 1-deoxy-D-xylulose 5-phosphate. Glutamate 132 serves as a coordination point for NADPH. Aspartate 156 contributes to the Mn(2+) binding site. Serine 157, glutamate 158, serine 182, and histidine 205 together coordinate 1-deoxy-D-xylulose 5-phosphate. Glutamate 158 contributes to the Mn(2+) binding site. Glycine 211 is a binding site for NADPH. 1-deoxy-D-xylulose 5-phosphate-binding residues include serine 218, asparagine 223, lysine 224, and glutamate 227. Mn(2+) is bound at residue glutamate 227.

Belongs to the DXR family. Mg(2+) serves as cofactor. It depends on Mn(2+) as a cofactor.

It catalyses the reaction 2-C-methyl-D-erythritol 4-phosphate + NADP(+) = 1-deoxy-D-xylulose 5-phosphate + NADPH + H(+). The protein operates within isoprenoid biosynthesis; isopentenyl diphosphate biosynthesis via DXP pathway; isopentenyl diphosphate from 1-deoxy-D-xylulose 5-phosphate: step 1/6. Its function is as follows. Catalyzes the NADPH-dependent rearrangement and reduction of 1-deoxy-D-xylulose-5-phosphate (DXP) to 2-C-methyl-D-erythritol 4-phosphate (MEP). This chain is 1-deoxy-D-xylulose 5-phosphate reductoisomerase, found in Gluconobacter oxydans (strain 621H) (Gluconobacter suboxydans).